The sequence spans 262 residues: Glutamine-binding protein (262 aa).

Positions 1–26 (MKRKTVWKIWITLALIALLSITALAG) are cleaved as a signal peptide. Cys-27 carries the N-palmitoyl cysteine lipid modification. Residue Cys-27 is the site of S-diacylglycerol cysteine attachment.

The protein belongs to the bacterial solute-binding protein 3 family.

It localises to the cell membrane. In terms of biological role, involved in glutamine-transport system. Interacts with the glutamine-transport system GlnPQ. This Geobacillus stearothermophilus (Bacillus stearothermophilus) protein is Glutamine-binding protein (glnH).